The sequence spans 246 residues: 1-(5-phosphoribosyl)-5-[(5-phosphoribosylamino)methylideneamino] imidazole-4-carboxamide isomerase (246 aa).

The active-site Proton acceptor is Asp-8. Asp-130 acts as the Proton donor in catalysis.

Belongs to the HisA/HisF family.

It is found in the cytoplasm. It carries out the reaction 1-(5-phospho-beta-D-ribosyl)-5-[(5-phospho-beta-D-ribosylamino)methylideneamino]imidazole-4-carboxamide = 5-[(5-phospho-1-deoxy-D-ribulos-1-ylimino)methylamino]-1-(5-phospho-beta-D-ribosyl)imidazole-4-carboxamide. Its pathway is amino-acid biosynthesis; L-histidine biosynthesis; L-histidine from 5-phospho-alpha-D-ribose 1-diphosphate: step 4/9. The polypeptide is 1-(5-phosphoribosyl)-5-[(5-phosphoribosylamino)methylideneamino] imidazole-4-carboxamide isomerase (Shigella sonnei (strain Ss046)).